The sequence spans 155 residues: Probable Brix domain-containing ribosomal biogenesis protein (155 aa).

Residues Met1–Glu155 enclose the Brix domain.

Probably involved in the biogenesis of the ribosome. This is Probable Brix domain-containing ribosomal biogenesis protein from Methanothermobacter thermautotrophicus (strain ATCC 29096 / DSM 1053 / JCM 10044 / NBRC 100330 / Delta H) (Methanobacterium thermoautotrophicum).